A 441-amino-acid chain; its full sequence is Eukaryotic translation initiation factor 3 subunit E (441 aa).

The PCI domain maps to 223–407 (IFFNHDNGRT…GTVIMEPTQP (185 aa)).

The protein belongs to the eIF-3 subunit E family. As to quaternary structure, component of the eukaryotic translation initiation factor 3 (eIF-3) complex (Potential). Binds to the translation initiation factors TIF3F1 and TIF3H1. Associates with the CSN (COP9 signalosome) complex. Interacts directly with CSN1, CSN4, CSN6A, CSN6B, CSN7, CSN8 and TIF3C1. Binds to 40S small ribosomal subunit S9 (RPS9B and RPS9C) via its N-terminal part. Interacts with the 26S proteasome subunit RPN12a via its C-terminal part. Also binds with At1g27930 and At4g30620.

It is found in the cytoplasm. Its subcellular location is the nucleus. Its function is as follows. Component of the eukaryotic translation initiation factor 3 (eIF-3) complex, which is involved in protein synthesis of a specialized repertoire of mRNAs and, together with other initiation factors, stimulates binding of mRNA and methionyl-tRNAi to the 40S ribosome. The eIF-3 complex specifically targets and initiates translation of a subset of mRNAs involved in cell proliferation (Potential). Negatively regulates translation during flower development. The protein is Eukaryotic translation initiation factor 3 subunit E of Arabidopsis thaliana (Mouse-ear cress).